Reading from the N-terminus, the 369-residue chain is MSRLLGGTLERVCKAVLLLCLLHFLVAVILYFDVYAQHLAFFSRFSTRSPAHALYPAASSSTNCSRPNATAASSGLPEVPSARPGPTAPVIPPCPDVPPGLVGRVVIEFTSPMPLERVQRENPGVLLGGRYSPPDCTPAQTVAVIIPFRHREHHLRYWLHYLHPMLRRQRLRYGVYVINQHGEETFNRAKLLNVGFLEALKEDAAYDCFIFSDVDLVPMDDRNLYRCGDQPRHFAIAMDKFGFRLPYASYFGGVSGLSKAQFLRINGFPNEYWGWGGEDDDIFNRISLTGMKISRPDVRIGRYRMIKHDRDKHNEPNPQRFNKIQNTKMSMKWDGIGSVRYRVLEVSRQPLFTNITVDIGQPMSWLTQG.

Residues 1 to 15 lie on the Cytoplasmic side of the membrane; the sequence is MSRLLGGTLERVCKA. The helical; Signal-anchor for type II membrane protein transmembrane segment at 16-36 threads the bilayer; sequence VLLLCLLHFLVAVILYFDVYA. Residues 37 to 369 are Lumenal-facing; the sequence is QHLAFFSRFS…GQPMSWLTQG (333 aa). The span at 58–73 shows a compositional bias: polar residues; the sequence is ASSSTNCSRPNATAAS. Residues 58 to 90 form a disordered region; that stretch reads ASSSTNCSRPNATAASSGLPEVPSARPGPTAPV. N-linked (GlcNAc...) asparagine glycosylation is found at N63 and N68. Residues C94 and C136 are joined by a disulfide bond. UDP-alpha-D-galactose contacts are provided by residues 147 to 151, 186 to 188, 214 to 215, and W275; these read PFRHR, FNR, and VD. C208 and C227 are disulfide-bonded. D215 is a Mn(2+) binding site. 277–280 is a binding site for N-acetyl-D-glucosamine; sequence GEDD. Position 308 (H308) interacts with Mn(2+). A UDP-alpha-D-galactose-binding site is contributed by 308–310; that stretch reads HDR. R320 is a binding site for N-acetyl-D-glucosamine. The N-linked (GlcNAc...) asparagine glycan is linked to N354.

This sequence belongs to the glycosyltransferase 7 family. The cofactor is Mn(2+).

It localises to the golgi apparatus. Its subcellular location is the golgi stack membrane. The enzyme catalyses D-glucose + UDP-alpha-D-galactose = lactose + UDP + H(+). The catalysed reaction is an N-acetyl-beta-D-glucosaminyl derivative + UDP-alpha-D-galactose = a beta-D-galactosyl-(1-&gt;4)-N-acetyl-beta-D-glucosaminyl derivative + UDP + H(+). It catalyses the reaction N-acetyl-D-glucosamine + UDP-alpha-D-galactose = beta-D-galactosyl-(1-&gt;4)-N-acetyl-D-glucosamine + UDP + H(+). It participates in protein modification; protein glycosylation. Functionally, responsible for the synthesis of complex-type N-linked oligosaccharides in many glycoproteins as well as the carbohydrate moieties of glycolipids. Can produce lactose. This is Beta-1,4-galactosyltransferase 2 from Mus musculus (Mouse).